Reading from the N-terminus, the 622-residue chain is Probable potassium transport system protein Kup 1 (622 aa).

The next 12 membrane-spanning stretches (helical) occupy residues Leu7 to Leu27, Leu50 to Leu70, Thr96 to Ile116, Val132 to Phe152, Phe165 to Ile185, Val210 to Ala230, Trp244 to Leu264, Ala282 to Ile302, Ile334 to Phe354, Leu360 to Phe380, Thr391 to Ala411, and Ile416 to Thr436.

It belongs to the HAK/KUP transporter (TC 2.A.72) family.

It is found in the cell inner membrane. The enzyme catalyses K(+)(in) + H(+)(in) = K(+)(out) + H(+)(out). In terms of biological role, transport of potassium into the cell. Likely operates as a K(+):H(+) symporter. This is Probable potassium transport system protein Kup 1 from Rhizobium meliloti (strain 1021) (Ensifer meliloti).